Here is a 334-residue protein sequence, read N- to C-terminus: MGEAGAAEEACRHMGTKEEFVKVRKKDLERLTTEVMQIRDFLPRILNGEVLESFQKLKIVEKNLERKEQELEQLKMDCEHFKARLETVQADNIREKKEKLALRQQLNEAKQQLLQQAEYCTEMGAAACTLLWGVSSSEEVVKAILGGDKALKFFSITGQTMESFVKSLDGDVQELDSDESQFVFALAGIVTNVAAIACGREFLVNSSRVLLDTILQLLGDLKPGQCTKLKVLMLMSLYNVSINLKGLKYISESPGFIPLLWWLLSDPDAEVCLHVLRLVQSVVLEPEVFSKSASEFRSSLPLQRILAMSKSRNPRLQTAAQELLEDLRTLEHNV.

Residues 14–51 (MGTKEEFVKVRKKDLERLTTEVMQIRDFLPRILNGEVL) are interaction with BRME1. Residues 49–122 (EVLESFQKLK…LLQQAEYCTE (74 aa)) adopt a coiled-coil conformation. The interaction with BRCA2 stretch occupies residues 83–334 (ARLETVQADN…EDLRTLEHNV (252 aa)).

In terms of assembly, associates with HSF2. The interaction seems to occur between the trimerization domain of HSF2 and the N-terminal hydrophilic region of HSF2BP. Interacts (via C-terminus) with BNC1. Interacts (via N-terminus) with BRCA2 and BRME1; the interactions are direct and allow the formation of a ternary complex. The complex BRME1:HSF2BP:BRCA2 interacts with SPATA22, MEIOB and RAD51. Post-translationally, sumoylated by UBE2I in response to MEKK1-mediated stimuli. Testis specific. Overexpressed in some tumors.

The protein resides in the cytoplasm. It is found in the chromosome. Functionally, meiotic recombination factor component of recombination bridges involved in meiotic double-strand break repair. Modulates the localization of recombinases DMC1:RAD51 to meiotic double-strand break (DSB) sites through the interaction with BRCA2 and its recruitment during meiotic recombination. Indispensable for the DSB repair, homologous synapsis, and crossover formation that are needed for progression past metaphase I, is essential for spermatogenesis and male fertility. Required for proper recombinase recruitment in female meiosis. Inhibits BNC1 transcriptional activity during spermatogenesis, probably by sequestering it in the cytoplasm. May be involved in modulating HSF2 activation in testis. The polypeptide is Heat shock factor 2-binding protein (Homo sapiens (Human)).